A 190-amino-acid polypeptide reads, in one-letter code: 3-isopropylmalate dehydratase small subunit (190 aa).

The protein belongs to the LeuD family. LeuD type 1 subfamily. Heterodimer of LeuC and LeuD.

It catalyses the reaction (2R,3S)-3-isopropylmalate = (2S)-2-isopropylmalate. It functions in the pathway amino-acid biosynthesis; L-leucine biosynthesis; L-leucine from 3-methyl-2-oxobutanoate: step 2/4. Functionally, catalyzes the isomerization between 2-isopropylmalate and 3-isopropylmalate, via the formation of 2-isopropylmaleate. In Staphylococcus aureus (strain MSSA476), this protein is 3-isopropylmalate dehydratase small subunit.